Here is a 242-residue protein sequence, read N- to C-terminus: ATP synthase subunit a (242 aa).

Transmembrane regions (helical) follow at residues 29 to 49, 84 to 104, 114 to 134, 140 to 160, 189 to 209, and 210 to 230; these read SSIY…LAFY, FIPL…LGMT, IIVT…VGFI, FLTL…MIVI, VIAS…IPLM, and VILI…FTIL.

It belongs to the ATPase A chain family. As to quaternary structure, F-type ATPases have 2 components, CF(1) - the catalytic core - and CF(0) - the membrane proton channel. CF(1) has five subunits: alpha(3), beta(3), gamma(1), delta(1), epsilon(1). CF(0) has three main subunits: a(1), b(2) and c(9-12). The alpha and beta chains form an alternating ring which encloses part of the gamma chain. CF(1) is attached to CF(0) by a central stalk formed by the gamma and epsilon chains, while a peripheral stalk is formed by the delta and b chains.

It is found in the cell inner membrane. Key component of the proton channel; it plays a direct role in the translocation of protons across the membrane. The sequence is that of ATP synthase subunit a from Rickettsia prowazekii (strain Madrid E).